The sequence spans 593 residues: Aspartate--tRNA(Asp/Asn) ligase (593 aa).

Glu-173 contributes to the L-aspartate binding site. Residues 197–200 (QLFK) form an aspartate region. Arg-219 contacts L-aspartate. Residues 219-221 (RDE) and Gln-228 contribute to the ATP site. His-451 provides a ligand contact to L-aspartate. Glu-485 is an ATP binding site. Arg-492 serves as a coordination point for L-aspartate. 537-540 (GIDR) contacts ATP.

The protein belongs to the class-II aminoacyl-tRNA synthetase family. Type 1 subfamily. As to quaternary structure, homodimer.

It localises to the cytoplasm. The enzyme catalyses tRNA(Asx) + L-aspartate + ATP = L-aspartyl-tRNA(Asx) + AMP + diphosphate. In terms of biological role, aspartyl-tRNA synthetase with relaxed tRNA specificity since it is able to aspartylate not only its cognate tRNA(Asp) but also tRNA(Asn). Reaction proceeds in two steps: L-aspartate is first activated by ATP to form Asp-AMP and then transferred to the acceptor end of tRNA(Asp/Asn). In Legionella pneumophila subsp. pneumophila (strain Philadelphia 1 / ATCC 33152 / DSM 7513), this protein is Aspartate--tRNA(Asp/Asn) ligase.